The chain runs to 152 residues: Small ribosomal subunit protein uS15 (152 aa).

The span at 1-11 (MARMHARRRGK) shows a compositional bias: basic residues. Positions 1-25 (MARMHARRRGKSSSVRPARNEAPAW) are disordered.

The protein belongs to the universal ribosomal protein uS15 family. In terms of assembly, part of the 30S ribosomal subunit.

The protein is Small ribosomal subunit protein uS15 of Methanoregula boonei (strain DSM 21154 / JCM 14090 / 6A8).